We begin with the raw amino-acid sequence, 336 residues long: 3-isopropylmalate dehydrogenase (336 aa).

Substrate is bound by residues Arg87, Arg97, Arg121, and Asp211. Residues Asp211, Asp235, and Asp239 each contribute to the Mg(2+) site. Residue 271–283 (GSAPDIAGQGIAD) coordinates NAD(+).

It belongs to the isocitrate and isopropylmalate dehydrogenases family. LeuB type 2 subfamily. As to quaternary structure, homodimer. The cofactor is Mg(2+). Mn(2+) serves as cofactor.

It localises to the cytoplasm. It carries out the reaction (2R,3S)-3-isopropylmalate + NAD(+) = 4-methyl-2-oxopentanoate + CO2 + NADH. The protein operates within amino-acid biosynthesis; L-leucine biosynthesis; L-leucine from 3-methyl-2-oxobutanoate: step 3/4. Functionally, catalyzes the oxidation of 3-carboxy-2-hydroxy-4-methylpentanoate (3-isopropylmalate) to 3-carboxy-4-methyl-2-oxopentanoate. The product decarboxylates to 4-methyl-2 oxopentanoate. The sequence is that of 3-isopropylmalate dehydrogenase from Mycobacterium leprae (strain Br4923).